Here is a 1138-residue protein sequence, read N- to C-terminus: Pesticidal crystal protein Cry7Ab (1138 aa).

The protein belongs to the delta endotoxin family.

In terms of biological role, promotes colloidosmotic lysis by binding to the midgut epithelial cells of Coleoptera. This chain is Pesticidal crystal protein Cry7Ab (cry7Ab), found in Bacillus thuringiensis subsp. dakota.